The chain runs to 228 residues: 3-dehydroquinate dehydratase (228 aa).

Residues 30 to 32 and Arg62 each bind 3-dehydroquinate; that span reads EWR. Catalysis depends on His118, which acts as the Proton donor/acceptor. The active-site Schiff-base intermediate with substrate is Lys143. The 3-dehydroquinate site is built by Arg186, Ser205, and Gln209.

This sequence belongs to the type-I 3-dehydroquinase family. Homodimer.

It carries out the reaction 3-dehydroquinate = 3-dehydroshikimate + H2O. It participates in metabolic intermediate biosynthesis; chorismate biosynthesis; chorismate from D-erythrose 4-phosphate and phosphoenolpyruvate: step 3/7. Its function is as follows. Involved in the third step of the chorismate pathway, which leads to the biosynthesis of aromatic amino acids. Catalyzes the cis-dehydration of 3-dehydroquinate (DHQ) and introduces the first double bond of the aromatic ring to yield 3-dehydroshikimate. This is 3-dehydroquinate dehydratase from Streptococcus pyogenes serotype M12 (strain MGAS9429).